The following is a 214-amino-acid chain: Ribonuclease HII (214 aa).

One can recognise an RNase H type-2 domain in the interval 26 to 214 (EIVCGVDEAG…PVREAFDLIR (189 aa)). A divalent metal cation is bound by residues Asp-32, Glu-33, and Asp-124.

The protein belongs to the RNase HII family. Mn(2+) serves as cofactor. It depends on Mg(2+) as a cofactor.

Its subcellular location is the cytoplasm. It carries out the reaction Endonucleolytic cleavage to 5'-phosphomonoester.. Its function is as follows. Endonuclease that specifically degrades the RNA of RNA-DNA hybrids. This chain is Ribonuclease HII, found in Burkholderia pseudomallei (strain 668).